A 471-amino-acid chain; its full sequence is 3-isopropylmalate dehydratase large subunit (471 aa).

[4Fe-4S] cluster is bound by residues cysteine 349, cysteine 409, and cysteine 412.

It belongs to the aconitase/IPM isomerase family. LeuC type 1 subfamily. Heterodimer of LeuC and LeuD. It depends on [4Fe-4S] cluster as a cofactor.

It carries out the reaction (2R,3S)-3-isopropylmalate = (2S)-2-isopropylmalate. It functions in the pathway amino-acid biosynthesis; L-leucine biosynthesis; L-leucine from 3-methyl-2-oxobutanoate: step 2/4. Functionally, catalyzes the isomerization between 2-isopropylmalate and 3-isopropylmalate, via the formation of 2-isopropylmaleate. This Aliivibrio fischeri (strain MJ11) (Vibrio fischeri) protein is 3-isopropylmalate dehydratase large subunit.